The sequence spans 159 residues: MEQSHQNLQSQFFIEHILQILPHRYPMLLVDRIIELQANKKIVAYKNITFNEDVFNGHFPNKPIFPGVLIVEGMAQTGGFLAFTSLWGFDPEIAKTKIVYFMTIDKVKFRIPVTPGDRLEYHLEVLKHKGMIWQVGGTAQVDGKVVAEAELKAMIAERD.

His-58 is an active-site residue.

It belongs to the thioester dehydratase family. FabZ subfamily.

It is found in the cytoplasm. It carries out the reaction a (3R)-hydroxyacyl-[ACP] = a (2E)-enoyl-[ACP] + H2O. Its function is as follows. Involved in unsaturated fatty acids biosynthesis. Catalyzes the dehydration of short chain beta-hydroxyacyl-ACPs and long chain saturated and unsaturated beta-hydroxyacyl-ACPs. The sequence is that of 3-hydroxyacyl-[acyl-carrier-protein] dehydratase FabZ from Helicobacter pylori (strain ATCC 700392 / 26695) (Campylobacter pylori).